The chain runs to 453 residues: Tol-Pal system protein TolB (453 aa).

The signal sequence occupies residues 1–31 (MINNLSISMTKVIKIILAIIIILFNTLSIFA).

It belongs to the TolB family. As to quaternary structure, the Tol-Pal system is composed of five core proteins: the inner membrane proteins TolA, TolQ and TolR, the periplasmic protein TolB and the outer membrane protein Pal. They form a network linking the inner and outer membranes and the peptidoglycan layer.

The protein resides in the periplasm. Part of the Tol-Pal system, which plays a role in outer membrane invagination during cell division and is important for maintaining outer membrane integrity. This is Tol-Pal system protein TolB from Orientia tsutsugamushi (strain Ikeda) (Rickettsia tsutsugamushi).